The chain runs to 74 residues: uncharacterized protein (74 aa).

A dksA C4-type zinc finger spans residues cysteine 35 to cysteine 59.

This is an uncharacterized protein from Enterobacteriaceae (Bacteriophage P2).